The sequence spans 462 residues: Na(+)/H(+) antiporter NhaA 2 (462 aa).

The disordered stretch occupies residues 1–31 (MKSSTREQTPVTSPTPHDPTPPTPPRGSTPL). Residues 16–27 (PHDPTPPTPPRG) show a composition bias toward pro residues. A run of 11 helical transmembrane segments spans residues 52 to 72 (IGGA…NSPW), 96 to 116 (LTLG…IAGL), 134 to 154 (LVPV…YVLV), 165 to 185 (GWAI…AVIS), 195 to 215 (FLLT…AIFY), 218 to 238 (TLAV…GLLV), 244 to 264 (SWWL…ASGI), 309 to 329 (FAVP…LSGL), 337 to 357 (VALG…LGAT), 382 to 402 (LLGG…FGAG), and 408 to 428 (HVKV…AVVL).

The protein belongs to the NhaA Na(+)/H(+) (TC 2.A.33) antiporter family.

The protein resides in the cell membrane. It catalyses the reaction Na(+)(in) + 2 H(+)(out) = Na(+)(out) + 2 H(+)(in). Na(+)/H(+) antiporter that extrudes sodium in exchange for external protons. The sequence is that of Na(+)/H(+) antiporter NhaA 2 from Kineococcus radiotolerans (strain ATCC BAA-149 / DSM 14245 / SRS30216).